Consider the following 186-residue polypeptide: Transcription factor pgmR (186 aa).

Residues 19 to 46 (CDECGAAKLKCDRGHPSCGRCISLGLKC) constitute a DNA-binding region (zn(2)-C6 fungal-type). Positions 52 to 98 (RKAGKPRRDAQSATRPPPTPGDSGPPLDYNSFGPTSPPSSVGDGATL) are disordered.

The protein resides in the nucleus. Functionally, transcription factor that specifically regulates the expression of the pgm gene cluster that mediates the biosynthesis of cryptic naphthoquinones derived pigments responsible for the coloration of the fruiting bodies. This Aspergillus terreus (strain NIH 2624 / FGSC A1156) protein is Transcription factor pgmR.